Reading from the N-terminus, the 166-residue chain is MRKHRGKPANSDLAELVHGSMAGELGFHLRRGQIAAFRQFARTITTTEGVTPGLYGMLQVIANNPGLSQSALAVAMDVDRSSIVKVVNQLEEKGLIVRDTSPTDRRRYCLHMTPPGVQALARIEQAVMRQDQDFSARLSDAERGTLIGLLKRLYRQDSETPANVRE.

One can recognise an HTH marR-type domain in the interval 1–155 (MRKHRGKPAN…LIGLLKRLYR (155 aa)).

Functionally, may be involved in the regulation of genes for 4-hydroxybenzoyl-CoA reductase. The protein is Putative transcriptional regulatory protein for hcr operon of Thauera aromatica.